The primary structure comprises 501 residues: ADP,ATP carrier protein 3 (501 aa).

A run of 12 helical transmembrane segments spans residues 23-43, 59-79, 90-110, 146-166, 183-203, 227-247, 293-313, 326-346, 361-381, 383-403, 446-466, and 470-490; these read LKLF…FGAL, IISF…TVLY, YIFY…AYII, YALM…LMFW, PVLG…LVFF, IILQ…MFLF, IALL…PWKA, VNFM…FMII, LLTP…IIFI, EIGT…VGAI, FGKS…PTAT, and IIIY…WNII.

Belongs to the ADP/ATP translocase tlc family.

The protein localises to the cell membrane. Functionally, provides the rickettsial cell with host ATP in exchange for rickettsial ADP. This is an obligate exchange system. This energy acquiring activity is an important component of rickettsial parasitism. This chain is ADP,ATP carrier protein 3 (tlcC), found in Rickettsia typhi (strain ATCC VR-144 / Wilmington).